The chain runs to 189 residues: Ion-translocating oxidoreductase complex subunit B (189 aa).

The interval 1–26 is hydrophobic; it reads MSAVMIAVVLLGLLALVFGAILGFAA. Residues 32-90 enclose the 4Fe-4S domain; it reads EGDPLVDQVESLLPQTQCGQCGYPGCRPYAEAIAGGDQINKCPPGGTATMEKIAELMGV. [4Fe-4S] cluster contacts are provided by Cys-49, Cys-52, Cys-57, Cys-73, Cys-114, Cys-117, Cys-120, Cys-124, Cys-144, Cys-147, Cys-150, and Cys-154. 2 4Fe-4S ferredoxin-type domains span residues 105–134 and 136–164; these read KVAY…GAGK and MHTV…MLPV.

The protein belongs to the 4Fe4S bacterial-type ferredoxin family. RnfB subfamily. The complex is composed of six subunits: RnfA, RnfB, RnfC, RnfD, RnfE and RnfG. [4Fe-4S] cluster is required as a cofactor.

Its subcellular location is the cell inner membrane. Its function is as follows. Part of a membrane-bound complex that couples electron transfer with translocation of ions across the membrane. The protein is Ion-translocating oxidoreductase complex subunit B of Shewanella amazonensis (strain ATCC BAA-1098 / SB2B).